The sequence spans 701 residues: Meprin A subunit beta (701 aa).

Positions 1–22 are cleaved as a signal peptide; sequence MDLWNLSWFLFLDALLVISGLA. Residues 23 to 61 constitute a propeptide that is removed on maturation; it reads TPENFDVDGGMDQDIFDINEGLGLDLFEGDIRLDRAQIR. Over 23–652 the chain is Extracellular; it reads TPENFDVDGG…CEKRGSTRDT (630 aa). Residues 62–256 enclose the Peptidase M12A domain; it reads NSIIGEKYRW…LKLNQLYNCS (195 aa). Intrachain disulfides connect C103/C255, C124/C144, and C265/C427. H152 serves as a coordination point for Zn(2+). Residue E153 is part of the active site. Residues H156 and H162 each contribute to the Zn(2+) site. 8 N-linked (GlcNAc...) asparagine glycosylation sites follow: N218, N254, N370, N421, N436, N445, N547, and N592. The region spanning 260–429 is the MAM domain; it reads SFMDSCSFEL…INLSETRCPH (170 aa). The MATH domain occupies 430–585; it reads HIWHIRNFTQ…GDDVYILLTV (156 aa). An O-linked (GalNAc...) serine glycan is attached at S593. Residues T594 and T599 are each glycosylated (O-linked (GalNAc...) threonine). The interval 595–607 is required for proteolytic processing; the sequence is QIQLTPAPSVQDL. A glycan (O-linked (GalNAc...) serine) is linked at S603. Positions 604 to 644 constitute an EGF-like domain; sequence VQDLCSKTTCKNDGVCTVRDGKAECRCQSGEDWWYMGERCE. Cystine bridges form between C608–C619, C613–C628, and C630–C643. A helical membrane pass occupies residues 653 to 673; the sequence is IVIAVSSTVAVFALMLIITLV. Over 674 to 701 the chain is Cytoplasmic; the sequence is SVYCTRKKYRERMSSNRPNLTPQNQHAF. Residue T694 is modified to Phosphothreonine.

Homotetramer consisting of disulfide-linked beta subunits, or heterotetramer of two alpha and two beta subunits formed by non-covalent association of two disulfide-linked heterodimers. Interacts with MBL2 through its carbohydrate moiety. This interaction may inhibit its catalytic activity. Interacts with TSPAN8. Requires Zn(2+) as cofactor. Post-translationally, phosphorylated by PKC at multiple sites of its cytoplasmic part. Phosphorylation dcreases activity at the cell surface, leading to diminished substrate cleavage. N-glycosylated; contains high mannose and/or complex biantennary structures. In terms of processing, O-glycosylation protect the C-terminal region from proteolytic cleavage and diminish secretion, this seems to be specific to human. Post-translationally, proteolytically activated by trypsin in the intestinal lumen and kallikrein-related peptidases in other tissues. The major site of expression is the brush border membrane of small intestinal and kidney epithelial cells.

It is found in the cell membrane. The protein resides in the secreted. It catalyses the reaction Hydrolysis of proteins, including azocasein, and peptides. Hydrolysis of 5-His-|-Leu-6, 6-Leu-|-Cys-7, 14-Ala-|-Leu-15 and 19-Cys-|-Gly-20 bonds in insulin B chain.. With respect to regulation, strongly inhibited by fetuin-A/AHSG. Functionally, membrane metallopeptidase that sheds many membrane-bound proteins. Exhibits a strong preference for acidic amino acids at the P1' position. Known substrates include: FGF19, VGFA, IL1B, IL18, procollagen I and III, E-cadherin, KLK7, gastrin, ADAM10, tenascin-C. The presence of several pro-inflammatory cytokine among substrates implicate MEP1B in inflammation. It is also involved in tissue remodeling due to its capability to degrade extracellular matrix components. Also cleaves the amyloid precursor protein/APP, thereby releasing neurotoxic amyloid beta peptides. The polypeptide is Meprin A subunit beta (MEP1B) (Homo sapiens (Human)).